We begin with the raw amino-acid sequence, 370 residues long: Pantothenate kinase 3 (370 aa).

Glu-138 serves as the catalytic Proton acceptor. Acetyl-CoA contacts are provided by Ser-192, Ser-195, and Arg-207.

Belongs to the type II pantothenate kinase family. As to quaternary structure, homodimer.

The protein resides in the cytoplasm. It carries out the reaction (R)-pantothenate + ATP = (R)-4'-phosphopantothenate + ADP + H(+). The protein operates within cofactor biosynthesis; coenzyme A biosynthesis; CoA from (R)-pantothenate: step 1/5. Subject to allosteric regulation, exists in two distinct conformational states, a catalytically incompetent (or open) conformation stabilized by the binding of acetyl(acyl)-CoA, and a catalytically competent (or closed) conformation stabilized by ATP-binding. Inhibited by acetyl-CoA and its thioesters which act as allosteric inhibitors and compete with the ATP-binding site. Catalyzes the phosphorylation of pantothenate to generate 4'-phosphopantothenate in the first and rate-determining step of coenzyme A (CoA) synthesis. This Bos taurus (Bovine) protein is Pantothenate kinase 3 (PANK3).